A 652-amino-acid polypeptide reads, in one-letter code: NADH-ubiquinone oxidoreductase chain 5 (652 aa).

Transmembrane regions (helical) follow at residues 1–21 (MYLSIIILPLLGCIVSGFLGR), 30–50 (LITCSNVVITTILSILAFIEV), 72–92 (IIWGFQFDSLTVSMLIPVLII), 119–139 (LFTFMMIILVTANNYLLMFVG), 140–160 (WEGVGVCSYLLVSFWFTRIAA), 177–197 (FLTIGMFAILWSLGNLDYSTV), 200–220 (LAPYINSKVVLIIGICLLIGA), 241–261 (TPVSALIHAATMVTAGVYLLM), 274–294 (LLLCLWLGAITTVFSSLIGLF), 301–319 (VIAYSTMSQLGMMVIAIGL), 331–351 (NHAFYKALLFLGAGSVIHAVA), 365–385 (FLPLTYSVMLIASLSLVAFPF), 403–423 (FSFSGVAVYIIATIGAIFTTL), 454–474 (LFLTLPLIILAIFSIFFGFIT), 505–525 (FAVPVLFKLLPFIFTISFSII), and 619–639 (LYILVAFILYLLYNYLSFNFL).

Belongs to the complex I subunit 5 family.

It is found in the mitochondrion inner membrane. It catalyses the reaction a ubiquinone + NADH + 5 H(+)(in) = a ubiquinol + NAD(+) + 4 H(+)(out). Its function is as follows. Core subunit of the mitochondrial membrane respiratory chain NADH dehydrogenase (Complex I) that is believed to belong to the minimal assembly required for catalysis. Complex I functions in the transfer of electrons from NADH to the respiratory chain. The immediate electron acceptor for the enzyme is believed to be ubiquinone. The chain is NADH-ubiquinone oxidoreductase chain 5 (ND5) from Podospora anserina (strain S / ATCC MYA-4624 / DSM 980 / FGSC 10383) (Pleurage anserina).